We begin with the raw amino-acid sequence, 404 residues long: Argininosuccinate synthase (404 aa).

Residues 10–18 and alanine 37 contribute to the ATP site; that span reads AYSGGLDTS. L-citrulline is bound by residues tyrosine 90 and serine 95. Glycine 120 contacts ATP. The L-aspartate site is built by threonine 122, asparagine 126, and aspartate 127. L-citrulline is bound at residue asparagine 126. Positions 130, 180, 189, 265, and 277 each coordinate L-citrulline.

It belongs to the argininosuccinate synthase family. Type 1 subfamily. In terms of assembly, homotetramer.

The protein resides in the cytoplasm. It carries out the reaction L-citrulline + L-aspartate + ATP = 2-(N(omega)-L-arginino)succinate + AMP + diphosphate + H(+). It participates in amino-acid biosynthesis; L-arginine biosynthesis; L-arginine from L-ornithine and carbamoyl phosphate: step 2/3. The chain is Argininosuccinate synthase from Helicobacter hepaticus (strain ATCC 51449 / 3B1).